We begin with the raw amino-acid sequence, 83 residues long: UPF0512 protein I (83 aa).

It belongs to the UPF0512 family.

The polypeptide is UPF0512 protein I (Dictyostelium discoideum (Social amoeba)).